We begin with the raw amino-acid sequence, 145 residues long: Probable inactive ribonuclease-like protein 12 (145 aa).

Positions 1–19 (MVLMVVVFLLLLFWENELT) are cleaved as a signal peptide.

This sequence belongs to the pancreatic ribonuclease family.

The protein resides in the secreted. Does not exhibit any ribonuclease activity. In Mus musculus (Mouse), this protein is Probable inactive ribonuclease-like protein 12 (Rnase12).